We begin with the raw amino-acid sequence, 138 residues long: Small ribosomal subunit protein uS12 (138 aa).

The segment at 33–55 is disordered; sequence KEHTNVSSPQKRGVCTRVGTMTP. At D102 the chain carries 3-methylthioaspartic acid.

The protein belongs to the universal ribosomal protein uS12 family. In terms of assembly, part of the 30S ribosomal subunit. Contacts proteins S8 and S17. May interact with IF1 in the 30S initiation complex.

Its function is as follows. With S4 and S5 plays an important role in translational accuracy. Functionally, interacts with and stabilizes bases of the 16S rRNA that are involved in tRNA selection in the A site and with the mRNA backbone. Located at the interface of the 30S and 50S subunits, it traverses the body of the 30S subunit contacting proteins on the other side and probably holding the rRNA structure together. The combined cluster of proteins S8, S12 and S17 appears to hold together the shoulder and platform of the 30S subunit. The polypeptide is Small ribosomal subunit protein uS12 (Bacillus velezensis (strain DSM 23117 / BGSC 10A6 / LMG 26770 / FZB42) (Bacillus amyloliquefaciens subsp. plantarum)).